Reading from the N-terminus, the 192-residue chain is uncharacterized protein (192 aa).

Residues 29 to 160 (HRQAAVLIPI…PLDIYRRGDS (132 aa)) enclose the Nudix hydrolase domain. The Nudix box signature appears at 67 to 89 (GAVDDTDASVIAAALREAEEEVA). Positions 83 and 87 each coordinate Mg(2+).

This sequence belongs to the Nudix hydrolase family. PCD1 subfamily. Requires Mn(2+) as cofactor. Mg(2+) serves as cofactor.

In terms of biological role, probably mediates the hydrolysis of some nucleoside diphosphate derivatives. This is an uncharacterized protein from Escherichia coli O139:H28 (strain E24377A / ETEC).